Reading from the N-terminus, the 575-residue chain is MNILELSEQEIIRRNSLNELRAMGIEPYPAAEYVTNAFSTDIKAEFKDDETPRQVSVAGRMMSRRIMGKASFIELQDSKGRIQVYITRDDICPGEDKEMYNTVFKRLLDLGDFIGIEGFVFRTQMGEISIHAQKLTVLAKSIKPLPIVKYKDGVTYDSFEDPELRYRQRYVDLAVNEGVKDIFIKRSKVYSSMREYFNSKGYMEVETPILQAIAGGAAARPFMTHHNALDIPLYMRIASELYLKRLIVGGFEGVYEIGKNFRNEGMDRTHNPEFTCMEIYVAYKDYNWMMEFTEKMIEKICLDVNGTTEVKVGDNIINFKAPYKRVTMLGAIKEHTGYDLTGMNEEQIREVCKKLNMEIDDTMGKGKLIDEIFGEFCEGTYIQPTFITDYPIEMSPLTKKHRDNPELTERFELMVNGKELCNAYSELNDPIDQLERFEDQMKLSEKGDDEAMIIDKDFVRALEYGMPPTSGMGIGMDRLTMLMTGQSTIQEVLFFPQMRPEKVVPKDSASKFMELGIAEEWVPVIQKAGYNQVADMKEVNPQKFHQDICGINKKYKLELTNPSVNDVAEWIQKIK.

Positions 412 and 419 each coordinate Mg(2+).

The protein belongs to the class-II aminoacyl-tRNA synthetase family. In terms of assembly, homodimer. Requires Mg(2+) as cofactor.

It is found in the cytoplasm. It carries out the reaction tRNA(Lys) + L-lysine + ATP = L-lysyl-tRNA(Lys) + AMP + diphosphate. In Bacteroides fragilis (strain ATCC 25285 / DSM 2151 / CCUG 4856 / JCM 11019 / LMG 10263 / NCTC 9343 / Onslow / VPI 2553 / EN-2), this protein is Lysine--tRNA ligase.